The following is a 56-amino-acid chain: uncharacterized protein (56 aa).

Residues 2–22 (ILYIIVAISILLNIILGIKVI) form a helical membrane-spanning segment.

The protein resides in the membrane. This is an uncharacterized protein from Methanocaldococcus jannaschii (strain ATCC 43067 / DSM 2661 / JAL-1 / JCM 10045 / NBRC 100440) (Methanococcus jannaschii).